We begin with the raw amino-acid sequence, 395 residues long: GPI-anchor transamidase (395 aa).

A signal peptide spans 1–27 (MAAPCFLTLRVATLAALALLSLGSSAA). Over 28–368 (GHIEDQAEQF…PKPRDWHPPG (341 aa)) the chain is Lumenal. Ca(2+)-binding residues include aspartate 79, isoleucine 82, glutamate 118, and aspartate 120. Histidine 164 functions as the Proton donor in the catalytic mechanism. The active-site Nucleophile; acyl-thioester intermediate is cysteine 206. Residues cysteine 206, serine 232, and serine 234 each contribute to the a protein site. Residues 231-236 (DSLSHQ) are autoinhibitory loop. A disulfide bridge links cysteine 275 with cysteine 280. Residues 369–385 (GFILGLWALIIMVFFKT) form a helical membrane-spanning segment. Residues 386-395 (YGIKHMKFIF) lie on the Cytoplasmic side of the membrane.

Belongs to the peptidase C13 family. In terms of assembly, heteropentamer. Part of the GPI-anchor transamidase complex, consisting of PIGK, PIGT, PIGS, PIGU and GAA1. Interacts with GPAA1. Interacts with PIGT; this interaction, via a disulfide link, stabilizes the expression of GAA1 and PIGK and links them to PIGS. In terms of processing, the disulfide bond between PIGK/GPI8 and PIGT is important for normal enzyme activity.

It is found in the endoplasmic reticulum membrane. The protein operates within glycolipid biosynthesis; glycosylphosphatidylinositol-anchor biosynthesis. With respect to regulation, in the absence of proproteins substrates, exists in an inactive state with a disrupted catalytic site by an autoinhibitory loop. The binding of proprotein substrates, particularly the CSP region, to GPI-T triggers concerted conformational changes that alleviate the inhibition by the autoinhibitory loop. Meanwhile, proprotein residues near the omega- site induce the formation of a catalytic cleft for catalysis, following which the products are released and GPI-T reverts to the inactive state. In terms of biological role, catalytic subunit of the glycosylphosphatidylinositol-anchor (GPI-anchor) transamidase (GPI-T) complex that catalyzes the formation of the linkage between a proprotein and a GPI-anchor and participates in GPI anchored protein biosynthesis. Recognizes diverse proproteins at a C-terminal signal peptide (CSP) region that lacks consensus sequence and replaces it with a GPI-anchor via a transamidation reaction. Transamidation catalysis reaction follows a two-phase mechanism. In the acyl-enzyme phase, the carbonyl group of the proproteins's omega-site undergoes a nucleophilic attack forming an enzyme-substrate thioester bond. Followed by a general acid catalysis that allows CSP releasing, regenerating the carbonyl, and forming the acyl-enzyme intermediate. In the GPI-anchor attachment phase, the amino group of the GPI-anchor's ethanolamine phosphate, the one on third mannose (EtNP3), mediates a nucleophilic attack on the carbonyl of the acyl-enzyme intermediate, replacing the CSP, allowing GPI-anchor attachment to the omega-residue, therefore forming the product and freeing the enzyme. This Mus musculus (Mouse) protein is GPI-anchor transamidase.